Here is a 430-residue protein sequence, read N- to C-terminus: Probable glucose-6-phosphate isomerase (430 aa).

E271 serves as the catalytic Proton donor. Active-site residues include H292, H303, and K403.

The protein belongs to the GPI family.

It localises to the cytoplasm. The enzyme catalyses alpha-D-glucose 6-phosphate = beta-D-fructose 6-phosphate. It participates in carbohydrate biosynthesis; gluconeogenesis. The protein operates within carbohydrate degradation; glycolysis; D-glyceraldehyde 3-phosphate and glycerone phosphate from D-glucose: step 2/4. Catalyzes the reversible isomerization of glucose-6-phosphate to fructose-6-phosphate. This is Probable glucose-6-phosphate isomerase from Haloquadratum walsbyi (strain DSM 16790 / HBSQ001).